The sequence spans 652 residues: Na(+)/H(+) antiporter NhaA 3 (652 aa).

Residues 1 to 428 (MTGEIPRGRR…GASLTTWLVF (428 aa)) are na(+)/H(+) antiporter NhaA. The next 11 membrane-spanning stretches (helical) occupy residues 32–52 (ETGSARVLLAAAVVALAWVNL), 78–98 (LRFWVNSGLMTFFFLVIGLEV), 114–134 (MLPLLAGIGGILAPIAIYLAF), 142–162 (VGWGVVMATDTALALGMLAVL), 173–193 (FLLTVAVVDDLIVIVVLAIAY), 200–220 (MALFVAAGIFALVLLIRAAGV), 227–249 (LLLGVAAWLAVSESGVDPVVVGL), 306–326 (HPWASYLIVPLFALANVGVVV), 342–362 (GVLFAYVVGKPAGIVIASMLV), 376–396 (WAAIIGVGTVSGIGFTIALLI), and 411–431 (VGILVATVGASLTTWLVFRLA). In terms of domain architecture, Thioredoxin spans 429–623 (RLAARLAPAR…LSAAVMSAFA (195 aa)). The tract at residues 626-652 (RLRPEGGREPDHRSEAGSEQPDEEPGT) is disordered. Basic and acidic residues predominate over residues 627-641 (LRPEGGREPDHRSEA).

In the N-terminal section; belongs to the NhaA Na(+)/H(+) (TC 2.A.33) antiporter family.

It localises to the cell membrane. It catalyses the reaction Na(+)(in) + 2 H(+)(out) = Na(+)(out) + 2 H(+)(in). In terms of biological role, na(+)/H(+) antiporter that extrudes sodium in exchange for external protons. The protein is Na(+)/H(+) antiporter NhaA 3 of Salinispora tropica (strain ATCC BAA-916 / DSM 44818 / JCM 13857 / NBRC 105044 / CNB-440).